Consider the following 602-residue polypeptide: Adenylosuccinate synthetase (602 aa).

GTP-binding positions include 74–80 (GDEGKGK) and 104–106 (GHT). D75 acts as the Proton acceptor in catalysis. Residues D75 and G104 each coordinate Mg(2+). IMP-binding positions include 75-78 (DEGK), 102-105 (NAGH), T189, K203, Q315, T331, and K459. Catalysis depends on H105, which acts as the Proton donor. Residue 455–461 (AVTKKPR) participates in substrate binding. Residues R461 and 589 to 591 (GNG) contribute to the GTP site.

It belongs to the adenylosuccinate synthetase family. As to quaternary structure, homodimer. Mg(2+) is required as a cofactor.

The protein resides in the cytoplasm. It carries out the reaction IMP + L-aspartate + GTP = N(6)-(1,2-dicarboxyethyl)-AMP + GDP + phosphate + 2 H(+). It participates in purine metabolism; AMP biosynthesis via de novo pathway; AMP from IMP: step 1/2. In terms of biological role, plays an important role in the salvage pathway for purine nucleotide biosynthesis. Catalyzes the first committed step in the biosynthesis of AMP from IMP. This is Adenylosuccinate synthetase from Trypanosoma brucei gambiense (strain MHOM/CI/86/DAL972).